Consider the following 358-residue polypeptide: Isopentenyl-diphosphate delta-isomerase (358 aa).

12-13 (RK) is a binding site for substrate. FMN is bound by residues 69–71 (AMT), S99, and N128. Q158 is a substrate binding site. Residue E159 participates in Mg(2+) binding. FMN is bound by residues K190, T220, 267–269 (GIR), and 288–289 (AG).

The protein belongs to the IPP isomerase type 2 family. In terms of assembly, homooctamer. Dimer of tetramers. It depends on FMN as a cofactor. NADPH is required as a cofactor. Requires Mg(2+) as cofactor.

It localises to the cytoplasm. It carries out the reaction isopentenyl diphosphate = dimethylallyl diphosphate. Functionally, involved in the biosynthesis of isoprenoids. Catalyzes the 1,3-allylic rearrangement of the homoallylic substrate isopentenyl (IPP) to its allylic isomer, dimethylallyl diphosphate (DMAPP). The sequence is that of Isopentenyl-diphosphate delta-isomerase from Listeria monocytogenes serotype 4b (strain F2365).